Reading from the N-terminus, the 102-residue chain is Large ribosomal subunit protein uL24 (102 aa).

It belongs to the universal ribosomal protein uL24 family. In terms of assembly, part of the 50S ribosomal subunit.

One of two assembly initiator proteins, it binds directly to the 5'-end of the 23S rRNA, where it nucleates assembly of the 50S subunit. In terms of biological role, one of the proteins that surrounds the polypeptide exit tunnel on the outside of the subunit. This chain is Large ribosomal subunit protein uL24, found in Cupriavidus necator (strain ATCC 17699 / DSM 428 / KCTC 22496 / NCIMB 10442 / H16 / Stanier 337) (Ralstonia eutropha).